Consider the following 539-residue polypeptide: Chaperonin GroEL (539 aa).

Residues 29-32 (TLGP), 86-90 (DGTTT), Gly413, 477-479 (DAL), and Asp493 contribute to the ATP site.

It belongs to the chaperonin (HSP60) family. As to quaternary structure, forms a cylinder of 14 subunits composed of two heptameric rings stacked back-to-back. Interacts with the co-chaperonin GroES.

Its subcellular location is the cytoplasm. The catalysed reaction is ATP + H2O + a folded polypeptide = ADP + phosphate + an unfolded polypeptide.. Its function is as follows. Together with its co-chaperonin GroES, plays an essential role in assisting protein folding. The GroEL-GroES system forms a nano-cage that allows encapsulation of the non-native substrate proteins and provides a physical environment optimized to promote and accelerate protein folding. In Clostridium perfringens (strain ATCC 13124 / DSM 756 / JCM 1290 / NCIMB 6125 / NCTC 8237 / Type A), this protein is Chaperonin GroEL.